A 629-amino-acid polypeptide reads, in one-letter code: DNA-directed RNA polymerase subunit beta' (629 aa).

Residues Cys-70, Cys-72, Cys-85, and Cys-88 each coordinate Zn(2+). The Mg(2+) site is built by Asp-472, Asp-474, and Asp-476.

This sequence belongs to the RNA polymerase beta' chain family. RpoC1 subfamily. In plastids the minimal PEP RNA polymerase catalytic core is composed of four subunits: alpha, beta, beta', and beta''. When a (nuclear-encoded) sigma factor is associated with the core the holoenzyme is formed, which can initiate transcription. Requires Mg(2+) as cofactor. The cofactor is Zn(2+).

The protein localises to the plastid. It localises to the chloroplast. The enzyme catalyses RNA(n) + a ribonucleoside 5'-triphosphate = RNA(n+1) + diphosphate. In terms of biological role, DNA-dependent RNA polymerase catalyzes the transcription of DNA into RNA using the four ribonucleoside triphosphates as substrates. The sequence is that of DNA-directed RNA polymerase subunit beta' from Pyropia yezoensis (Susabi-nori).